The following is a 508-amino-acid chain: Zinc finger CCCH-type with G patch domain-containing protein (508 aa).

Positions 67–86 (QQESSHHDSGTPETDTKTSV) are disordered. Positions 69–86 (ESSHHDSGTPETDTKTSV) are enriched in basic and acidic residues. A C3H1-type zinc finger spans residues 161–188 (RSMVPCPYFLEGKCKFAGAECRFSHGYL). Positions 253–282 (IYPLGPEEVESDSESDSQSDTGDSSSSKAA) are disordered. Acidic residues predominate over residues 259–269 (EEVESDSESDS). A compositionally biased stretch (low complexity) spans 270-279 (QSDTGDSSSS). One can recognise a G-patch domain in the interval 310–356 (TKGIGSKLMAKMGYIFGKGLGKDGEGRVEPIEVVVLPQGKSLDKCAE). The interval 404 to 426 (SLHDLRVSHPGAKPDIRKTRKSA) is disordered.

It localises to the nucleus. In terms of biological role, transcription repressor. The sequence is that of Zinc finger CCCH-type with G patch domain-containing protein from Nematostella vectensis (Starlet sea anemone).